A 153-amino-acid polypeptide reads, in one-letter code: uncharacterized protein (153 aa).

Its subcellular location is the mitochondrion. This is an uncharacterized protein from Arabidopsis thaliana (Mouse-ear cress).